We begin with the raw amino-acid sequence, 173 residues long: Ferritin heavy chain (173 aa).

The Ferritin-like diiron domain maps to 6 to 155; the sequence is QNFHEECERG…GYVTNLKRCG (150 aa). Residues Glu-23, Glu-58, His-61, Glu-103, and Gln-137 each coordinate Fe cation.

It belongs to the ferritin family. Oligomer of 24 subunits. There are two types of subunits: L (light) chain and H (heavy) chain. The functional molecule is roughly spherical and contains a central cavity into which the insoluble mineral iron core is deposited.

Its subcellular location is the cytoplasm. It catalyses the reaction 4 Fe(2+) + O2 + 4 H(+) = 4 Fe(3+) + 2 H2O. Its function is as follows. Stores iron in a soluble, non-toxic, readily available form. Important for iron homeostasis. Has ferroxidase activity. Iron is taken up in the ferrous form and deposited as ferric hydroxides after oxidation. In Echinococcus granulosus (Hydatid tapeworm), this protein is Ferritin heavy chain.